A 610-amino-acid polypeptide reads, in one-letter code: Pentatricopeptide repeat-containing protein At5g40400 (610 aa).

PPR repeat units follow at residues 165-199 (DPVV…GFSV), 200-234 (SVVT…GIHP), 235-269 (NTYT…GFEP), 270-304 (DLVT…RVVP), 305-339 (DLVT…GIKP), 340-374 (DCMS…SVVP), 375-409 (DRFT…KVDI), 410-445 (PFEV…GHEA), 446-480 (KPET…NQVL), 481-515 (DAKT…EVKP), 516-546 (DSFI…FAME), and 551-586 (DPES…GFVP).

This sequence belongs to the PPR family. P subfamily.

This is Pentatricopeptide repeat-containing protein At5g40400 from Arabidopsis thaliana (Mouse-ear cress).